Consider the following 590-residue polypeptide: DNA mismatch repair protein MutL (590 aa).

Belongs to the DNA mismatch repair MutL/HexB family.

Its function is as follows. This protein is involved in the repair of mismatches in DNA. It is required for dam-dependent methyl-directed DNA mismatch repair. May act as a 'molecular matchmaker', a protein that promotes the formation of a stable complex between two or more DNA-binding proteins in an ATP-dependent manner without itself being part of a final effector complex. This Caldanaerobacter subterraneus subsp. tengcongensis (strain DSM 15242 / JCM 11007 / NBRC 100824 / MB4) (Thermoanaerobacter tengcongensis) protein is DNA mismatch repair protein MutL.